A 158-amino-acid chain; its full sequence is Non-secretory ribonuclease (158 aa).

An N-terminal signal peptide occupies residues 1–27; that stretch reads MVPKLFTSQICLLPLLGLLSAEGSPHA. The active-site Proton acceptor is His-42. Tyr-60 is modified (3'-nitrotyrosine). Substrate is bound at residue 65 to 69; sequence KNKNT. Asn-86, Asn-92, and Asn-111 each carry an N-linked (GlcNAc...) asparagine glycan. His-153 functions as the Proton donor in the catalytic mechanism.

It belongs to the pancreatic ribonuclease family. Interacts with and forms a tight 1:1 complex with RNH1. Dimerization of two such complexes may occur.

The protein resides in the lysosome. It is found in the cytoplasmic granule. The catalysed reaction is an [RNA] containing cytidine + H2O = an [RNA]-3'-cytidine-3'-phosphate + a 5'-hydroxy-ribonucleotide-3'-[RNA].. The enzyme catalyses an [RNA] containing uridine + H2O = an [RNA]-3'-uridine-3'-phosphate + a 5'-hydroxy-ribonucleotide-3'-[RNA].. Functionally, this is a non-secretory ribonuclease. It is a pyrimidine specific nuclease with a slight preference for U. Cytotoxin and helminthotoxin. Possesses a wide variety of biological activities. The chain is Non-secretory ribonuclease (RNASE2) from Callithrix jacchus (White-tufted-ear marmoset).